A 92-amino-acid polypeptide reads, in one-letter code: PqqA binding protein (92 aa).

It belongs to the PqqD family. As to quaternary structure, monomer. Interacts with PqqE.

Its pathway is cofactor biosynthesis; pyrroloquinoline quinone biosynthesis. Functionally, functions as a PqqA binding protein and presents PqqA to PqqE, in the pyrroloquinoline quinone (PQQ) biosynthetic pathway. This chain is PqqA binding protein, found in Stutzerimonas stutzeri (strain A1501) (Pseudomonas stutzeri).